The chain runs to 228 residues: MEYSVVIPAAGQGKRMRAGHNKQFIELGGKPILAHTLAVFEQDDWCTNVVIVANEQEIEEMGELANRYQISKAKKIVAGGRERQESVFAGLKALSQDGLVLIHDGARPFVTEKEIHSLVETAAKTHAAVLAVPVKDTIKRVEGEAVLETMPREELWAVQTPQAFDLALIKQAHQKAENEQMLGTDDASLMEWLGYSVAVVQGSYFNFKLTTPEDLLFAEAILAEKERR.

This sequence belongs to the IspD/TarI cytidylyltransferase family. IspD subfamily.

The enzyme catalyses 2-C-methyl-D-erythritol 4-phosphate + CTP + H(+) = 4-CDP-2-C-methyl-D-erythritol + diphosphate. Its pathway is isoprenoid biosynthesis; isopentenyl diphosphate biosynthesis via DXP pathway; isopentenyl diphosphate from 1-deoxy-D-xylulose 5-phosphate: step 2/6. Functionally, catalyzes the formation of 4-diphosphocytidyl-2-C-methyl-D-erythritol from CTP and 2-C-methyl-D-erythritol 4-phosphate (MEP). The protein is 2-C-methyl-D-erythritol 4-phosphate cytidylyltransferase of Halalkalibacterium halodurans (strain ATCC BAA-125 / DSM 18197 / FERM 7344 / JCM 9153 / C-125) (Bacillus halodurans).